The chain runs to 375 residues: Period circadian protein (375 aa).

Disordered stretches follow at residues 27 to 119 (VTAP…VPPV), 140 to 189 (KHRE…WEGE), and 219 to 255 (KCQA…QYTQ). A compositionally biased stretch (low complexity) spans 69–91 (SGNFTTGSNLHMSSVTNTSNAGT). Gly residues predominate over residues 92 to 113 (GTSGTGNSGGGGGGGGGAGPGN). The segment covering 145 to 156 (RGRSGEKNKKSA) has biased composition (basic and acidic residues). The segment covering 224-243 (GAGGGGSGSVGGTGNIGSGG) has biased composition (gly residues). A compositionally biased stretch (polar residues) spans 245–255 (NAQPSTNQYTQ).

In terms of assembly, forms a heterodimer with timeless (TIM); the complex then translocates into the nucleus. Post-translationally, phosphorylated with a circadian rhythmicity, probably by the double-time protein (dbt). Phosphorylation could be implicated in the stability of per monomer and in the formation of heterodimer per-tim.

It is found in the nucleus. The protein resides in the cytoplasm. Its subcellular location is the perinuclear region. Its function is as follows. Essential for biological clock functions. Determines the period length of circadian and ultradian rhythms; an increase in PER dosage leads to shortened circadian rhythms and a decrease leads to lengthened circadian rhythms. Essential for the circadian rhythmicity of locomotor activity, eclosion behavior, and for the rhythmic component of the male courtship song that originates in the thoracic nervous system. The biological cycle depends on the rhythmic formation and nuclear localization of the TIM-PER complex. Light induces the degradation of TIM, which promotes elimination of PER. Nuclear activity of the heterodimer coordinatively regulates PER and TIM transcription through a negative feedback loop. Behaves as a negative element in circadian transcriptional loop. Does not appear to bind DNA, suggesting indirect transcriptional inhibition. In Drosophila sucinea (Fruit fly), this protein is Period circadian protein (per).